Consider the following 155-residue polypeptide: Large ribosomal subunit protein uL13 (155 aa).

It belongs to the universal ribosomal protein uL13 family. Part of the 50S ribosomal subunit.

In terms of biological role, this protein is one of the early assembly proteins of the 50S ribosomal subunit, although it is not seen to bind rRNA by itself. It is important during the early stages of 50S assembly. The polypeptide is Large ribosomal subunit protein uL13 (Rickettsia rickettsii (strain Iowa)).